The primary structure comprises 460 residues: GTPase Der (460 aa).

2 consecutive EngA-type G domains span residues 2 to 164 (QSII…HEEF) and 196 to 368 (IRVG…ENFT). Residues 8-15 (GKPNVGKS), 55-59 (DSGGL), 116-119 (NKVD), 202-209 (GRVNVGKS), 249-253 (DTAGI), and 313-316 (NKWD) each bind GTP. In terms of domain architecture, KH-like spans 369 to 453 (QKIQTSKLNT…PLVIASRKKG (85 aa)).

This sequence belongs to the TRAFAC class TrmE-Era-EngA-EngB-Septin-like GTPase superfamily. EngA (Der) GTPase family. Associates with the 50S ribosomal subunit.

In terms of biological role, GTPase that plays an essential role in the late steps of ribosome biogenesis. This is GTPase Der from Campylobacter jejuni subsp. jejuni serotype O:23/36 (strain 81-176).